The sequence spans 197 residues: Holliday junction branch migration complex subunit RuvA (197 aa).

A domain I region spans residues 1-63 (MFEYLNGKLV…EDAHSLYGFV (63 aa)). The interval 64–142 (NESEKALFLR…ATGAVGISLL (79 aa)) is domain II. The tract at residues 142–146 (LDAAP) is flexible linker. The tract at residues 147–197 (ASNLALEEAIEALQALGYKATELKKIEKKLAQEAGLTSEEYIKSALKLMMK) is domain III.

This sequence belongs to the RuvA family. In terms of assembly, homotetramer. Forms an RuvA(8)-RuvB(12)-Holliday junction (HJ) complex. HJ DNA is sandwiched between 2 RuvA tetramers; dsDNA enters through RuvA and exits via RuvB. An RuvB hexamer assembles on each DNA strand where it exits the tetramer. Each RuvB hexamer is contacted by two RuvA subunits (via domain III) on 2 adjacent RuvB subunits; this complex drives branch migration. In the full resolvosome a probable DNA-RuvA(4)-RuvB(12)-RuvC(2) complex forms which resolves the HJ.

It localises to the cytoplasm. Its function is as follows. The RuvA-RuvB-RuvC complex processes Holliday junction (HJ) DNA during genetic recombination and DNA repair, while the RuvA-RuvB complex plays an important role in the rescue of blocked DNA replication forks via replication fork reversal (RFR). RuvA specifically binds to HJ cruciform DNA, conferring on it an open structure. The RuvB hexamer acts as an ATP-dependent pump, pulling dsDNA into and through the RuvAB complex. HJ branch migration allows RuvC to scan DNA until it finds its consensus sequence, where it cleaves and resolves the cruciform DNA. This is Holliday junction branch migration complex subunit RuvA from Lactococcus lactis subsp. cremoris (strain MG1363).